The following is a 541-amino-acid chain: Malate synthase (541 aa).

The Proton acceptor role is filled by Arg-169. Asp-454 serves as the catalytic Proton donor.

Belongs to the malate synthase family.

The protein localises to the cytoplasm. The enzyme catalyses glyoxylate + acetyl-CoA + H2O = (S)-malate + CoA + H(+). Its pathway is carbohydrate metabolism; glyoxylate cycle; (S)-malate from isocitrate: step 2/2. The polypeptide is Malate synthase (aceB) (Streptomyces clavuligerus).